The chain runs to 515 residues: Mucin-like protein Glc1.8b (515 aa).

The first 20 residues, 1-20 (MSQITLIILVLAIGFSCTKS), serve as a signal peptide directing secretion. Over 21–467 (HPINSTRDGE…ANDIKKPAFP (447 aa)) the chain is Extracellular. Asn24, Asn45, Asn51, Asn60, Asn85, Asn93, Asn102, Asn123, Asn129, Asn138, Asn180, Asn201, Asn207, Asn216, Asn258, Asn279, Asn285, Asn294, Asn319, Asn327, Asn336, Asn357, Asn363, Asn372, Asn397, Asn405, Asn413, Asn434, and Asn441 each carry an N-linked (GlcNAc...) asparagine; by host glycan. Residues 80–114 (SKKDENITGQSEINTSAKSQPINSTRDGEDSGTDL) are disordered. The span at 86–104 (ITGQSEINTSAKSQPINST) shows a compositional bias: polar residues. The disordered stretch occupies residues 314–358 (SKKDENITGQSEINTSAKSQPINSTRDGEDSGTDLKNLLTDPANT). The segment covering 320–338 (ITGQSEINTSAKSQPINST) has biased composition (polar residues). Residues 393 to 413 (RKDENVTGQSEFNISTNSNLN) form a disordered region. A helical membrane pass occupies residues 468-488 (YCIILITFQIVTVGMIIYLVF). Residues 489 to 515 (RTMRKPCQSERAIPLNSFGFGNNSSYE) lie on the Cytoplasmic side of the membrane.

Belongs to the polydnaviridae Glc1.8 protein family.

It is found in the host membrane. Functionally, involved in suppression of the insect cellular immune response. Inhibits host hemocyte adhesion and phagocytosis. In Microplitis demolitor (Parasitoid wasp), this protein is Mucin-like protein Glc1.8b (O16).